The sequence spans 229 residues: Sorting nexin-10A (229 aa).

The PX domain occupies 11–128 (FISVWVRDPQ…HLFLQSQLSI (118 aa)). Positions 54 and 95 each coordinate a 1,2-diacyl-sn-glycero-3-phospho-(1D-myo-inositol-3-phosphate).

This sequence belongs to the sorting nexin family.

Its subcellular location is the cytoplasm. It localises to the endosome membrane. The protein resides in the cytoskeleton. It is found in the microtubule organizing center. The protein localises to the centrosome. Functionally, probable phosphoinositide-binding protein involved in protein sorting and membrane trafficking in endosomes. May play a role in cilium biogenesis through regulation of the transport and the localization of proteins to the cilium. The polypeptide is Sorting nexin-10A (snx10a) (Danio rerio (Zebrafish)).